Reading from the N-terminus, the 511-residue chain is MFS-type transporper mpsC (511 aa).

Positions 1–35 (MTSSTESKHSNDESTDLEKQDAEESHGLPEERKQD) are enriched in basic and acidic residues. Residues 1-65 (MTSSTESKHS…PDDPANPMNW (65 aa)) are disordered. Transmembrane regions (helical) follow at residues 74 to 94 (VVMA…FAPA), 108 to 128 (ITAA…PLVI), 147 to 167 (ITVA…FLVF), 169 to 189 (LITG…IADV), 201 to 221 (AFAM…GFIA), 228 to 248 (WVFR…YFVM), and 303 to 323 (PITL…ILLF). N-linked (GlcNAc...) asparagine glycosylation occurs at Asn337. 5 helical membrane-spanning segments follow: residues 342 to 362 (GLSY…FGML), 383 to 403 (LLLM…YGWT), 411 to 431 (ILPM…MMPI), 443 to 465 (VAAS…LPLA), and 476 to 496 (GWGN…PILF).

Belongs to the major facilitator superfamily.

The protein resides in the membrane. MFS-type transporper; part of the gene cluster that mediates the biosynthesis of macrophasetins, 3-decalinoyltetramic acids (DTAs) which feature a tetramate (pyrrolidine-2,4-dione) unit connected to a decalin fragment and that have potent bioactivities. Efflux pump that might be required for efficient secretion of macrophasetins. The sequence is that of MFS-type transporper mpsC from Macrophomina phaseolina (strain MS6) (Charcoal rot fungus).